The following is a 423-amino-acid chain: Protein CLP1 homolog (423 aa).

ATP-binding positions include E19, K60, and 122-127 (DVGKTT).

It belongs to the Clp1 family. Clp1 subfamily.

It is found in the nucleus. In terms of biological role, required for endonucleolytic cleavage during polyadenylation-dependent pre-mRNA 3'-end formation. This chain is Protein CLP1 homolog (cbc), found in Culex quinquefasciatus (Southern house mosquito).